Here is a 581-residue protein sequence, read N- to C-terminus: uncharacterized protein (581 aa).

Belongs to the UbiD family.

This is an uncharacterized protein from Chlamydia caviae (strain ATCC VR-813 / DSM 19441 / 03DC25 / GPIC) (Chlamydophila caviae).